Consider the following 593-residue polypeptide: NADH-quinone oxidoreductase subunit C/D (593 aa).

An NADH dehydrogenase I subunit C region spans residues Met-1–Gln-184. Positions Asp-208–Arg-593 are NADH dehydrogenase I subunit D.

The protein in the N-terminal section; belongs to the complex I 30 kDa subunit family. It in the C-terminal section; belongs to the complex I 49 kDa subunit family. In terms of assembly, NDH-1 is composed of 13 different subunits. Subunits NuoB, CD, E, F, and G constitute the peripheral sector of the complex.

It is found in the cell inner membrane. It catalyses the reaction a quinone + NADH + 5 H(+)(in) = a quinol + NAD(+) + 4 H(+)(out). In terms of biological role, NDH-1 shuttles electrons from NADH, via FMN and iron-sulfur (Fe-S) centers, to quinones in the respiratory chain. The immediate electron acceptor for the enzyme in this species is believed to be ubiquinone. Couples the redox reaction to proton translocation (for every two electrons transferred, four hydrogen ions are translocated across the cytoplasmic membrane), and thus conserves the redox energy in a proton gradient. In Pseudomonas paraeruginosa (strain DSM 24068 / PA7) (Pseudomonas aeruginosa (strain PA7)), this protein is NADH-quinone oxidoreductase subunit C/D.